Here is a 442-residue protein sequence, read N- to C-terminus: Pentatricopeptide repeat-containing protein At2g27800, mitochondrial (442 aa).

Residues 1–67 (MSATRSTFLG…SFLPSIHVRF (67 aa)) constitute a mitochondrion transit peptide. 6 PPR repeats span residues 206-236 (NENL…MVTS), 244-286 (TIRT…GIEP), 287-322 (DVFA…DCEP), 323-357 (NSFT…GFVP), 358-392 (NGKS…GRVV), and 393-427 (DFIS…QLVD).

It belongs to the PPR family. P subfamily.

Its subcellular location is the mitochondrion. This Arabidopsis thaliana (Mouse-ear cress) protein is Pentatricopeptide repeat-containing protein At2g27800, mitochondrial.